The chain runs to 473 residues: MLQIYNTLSRSKQVFKPIVPGKVKMYVCGMTVYDFCHIGHARVMIVFDMVVRWLRASGYEVLYVRNITDIDDKIINRAIENGEPISALTNRFVDAMHADSDELGLMHPDQEPRATDYIAQMQGMIGKLIENELAYQANDGDVNFAVRLLPRYGQLSGKTLDELNAGERVAVGDGKRDPLDFVLWKSAKPEEPADTRWKSPWGEGRPGWHIECSAMSCDLLGEHFDIHGGGADLQFPHHENEIAQSEGALYGKDRKVDDAPFVNYWMHNGHIRVNEEKMSKSLGNFFLIRDVLKSFDPEVIRFFMLKTHYRSPINYSDAQLEEARSGLVRLYTALAQGSKAQTISLGSSNPWAKRFADAMNDDFNTPEAIAVLFDIVSEVNRAQGEEKQVLANILKALGASLNFLQRDPTVFLQSSAKDQAGLSPEQIEEQIAARVAAKQAKDFAKADAIRKALLEQGIVLEDKPGGLTGWRRA.

Residue Cys-28 coordinates Zn(2+). The short motif at 30-40 is the 'HIGH' region element; that stretch reads MTVYDFCHIGH. Residues Cys-212, His-237, and Glu-241 each contribute to the Zn(2+) site. The short motif at 277–281 is the 'KMSKS' region element; sequence KMSKS. Lys-280 contacts ATP.

It belongs to the class-I aminoacyl-tRNA synthetase family. As to quaternary structure, monomer. It depends on Zn(2+) as a cofactor.

It localises to the cytoplasm. It catalyses the reaction tRNA(Cys) + L-cysteine + ATP = L-cysteinyl-tRNA(Cys) + AMP + diphosphate. This Polynucleobacter necessarius subsp. necessarius (strain STIR1) protein is Cysteine--tRNA ligase.